A 199-amino-acid chain; its full sequence is 3-isopropylmalate dehydratase small subunit (199 aa).

Belongs to the LeuD family. LeuD type 1 subfamily. As to quaternary structure, heterodimer of LeuC and LeuD.

The catalysed reaction is (2R,3S)-3-isopropylmalate = (2S)-2-isopropylmalate. The protein operates within amino-acid biosynthesis; L-leucine biosynthesis; L-leucine from 3-methyl-2-oxobutanoate: step 2/4. Catalyzes the isomerization between 2-isopropylmalate and 3-isopropylmalate, via the formation of 2-isopropylmaleate. This chain is 3-isopropylmalate dehydratase small subunit, found in Bacillus licheniformis (strain ATCC 14580 / DSM 13 / JCM 2505 / CCUG 7422 / NBRC 12200 / NCIMB 9375 / NCTC 10341 / NRRL NRS-1264 / Gibson 46).